The chain runs to 88 residues: Gas vesicle protein A2 (88 aa).

This sequence belongs to the gas vesicle GvpA family. In terms of assembly, the gas vesicle shell is 2 nm thick and consists of a single layer of this protein. It forms helical ribs nearly perpendicular to the long axis of the vesicle.

It is found in the gas vesicle shell. In terms of biological role, gas vesicles are hollow, gas filled proteinaceous nanostructures found in some microorganisms. During planktonic growth they allow positioning of the organism at a favorable depth for light or nutrient acquisition. GvpA forms the protein shell. It is not clear if the 2 type A proteins in this organism are functionally redundant. Its function is as follows. When a minimal gvp locus (gvpA2-gvpR-gvpN-gvpF-gvpG-gvpL-gvpS-gvpK-gvpJ-gvpT-gvpU, called pNL29) is expressed in E.coli gas vesicles are made. The sequence is that of Gas vesicle protein A2 from Priestia megaterium (Bacillus megaterium).